We begin with the raw amino-acid sequence, 133 residues long: Small ribosomal subunit protein uS8 (133 aa).

The tract at residues 1–32 (MANHDPISDMLTRIRNASEKRHESTKVPASRM) is disordered. Residues 16–25 (NASEKRHEST) show a composition bias toward basic and acidic residues.

Belongs to the universal ribosomal protein uS8 family. As to quaternary structure, part of the 30S ribosomal subunit. Contacts proteins S5 and S12.

Functionally, one of the primary rRNA binding proteins, it binds directly to 16S rRNA central domain where it helps coordinate assembly of the platform of the 30S subunit. In Synechococcus sp. (strain CC9311), this protein is Small ribosomal subunit protein uS8.